Reading from the N-terminus, the 381-residue chain is Malonyl-CoA-acyl carrier protein transacylase, mitochondrial (381 aa).

Catalysis depends on residues Ser-151 and His-268. Lys-312 carries the N6-succinyllysine modification.

The protein belongs to the type II malonyltransferase family. As to expression, expressed in retinal ganglion cells.

It localises to the mitochondrion. It catalyses the reaction holo-[ACP] + malonyl-CoA = malonyl-[ACP] + CoA. The protein operates within lipid metabolism; fatty acid biosynthesis. Functionally, catalyzes the transfer of a malonyl moiety from malonyl-CoA to the free thiol group of the phosphopantetheine arm of the mitochondrial ACP protein (NDUFAB1). This suggests the existence of the biosynthesis of fatty acids in mitochondria. The chain is Malonyl-CoA-acyl carrier protein transacylase, mitochondrial from Mus musculus (Mouse).